Consider the following 479-residue polypeptide: Aspartyl/glutamyl-tRNA(Asn/Gln) amidotransferase subunit B (479 aa).

Belongs to the GatB/GatE family. GatB subfamily. As to quaternary structure, heterotrimer of A, B and C subunits.

The catalysed reaction is L-glutamyl-tRNA(Gln) + L-glutamine + ATP + H2O = L-glutaminyl-tRNA(Gln) + L-glutamate + ADP + phosphate + H(+). It catalyses the reaction L-aspartyl-tRNA(Asn) + L-glutamine + ATP + H2O = L-asparaginyl-tRNA(Asn) + L-glutamate + ADP + phosphate + 2 H(+). Its function is as follows. Allows the formation of correctly charged Asn-tRNA(Asn) or Gln-tRNA(Gln) through the transamidation of misacylated Asp-tRNA(Asn) or Glu-tRNA(Gln) in organisms which lack either or both of asparaginyl-tRNA or glutaminyl-tRNA synthetases. The reaction takes place in the presence of glutamine and ATP through an activated phospho-Asp-tRNA(Asn) or phospho-Glu-tRNA(Gln). The polypeptide is Aspartyl/glutamyl-tRNA(Asn/Gln) amidotransferase subunit B (Geobacter sulfurreducens (strain ATCC 51573 / DSM 12127 / PCA)).